The chain runs to 146 residues: MHVLLLNGPNLNLLGQREPGIYGCDTLATIETELTREAKADGVELVCFQSNFEGALIERIHQAMGESQGILINAGAYTHSSIAIRDALTGVAIPYVELHLSNTHAREPFRHQSYLAGRAVGVVSGFGAKSYSLALSGLVHHLRQGG.

The active-site Proton acceptor is the tyrosine 22. Substrate contacts are provided by asparagine 73, histidine 79, and aspartate 86. The Proton donor role is filled by histidine 99. Residues 100 to 101 (LS) and arginine 110 contribute to the substrate site.

The protein belongs to the type-II 3-dehydroquinase family. Homododecamer.

The enzyme catalyses 3-dehydroquinate = 3-dehydroshikimate + H2O. It functions in the pathway metabolic intermediate biosynthesis; chorismate biosynthesis; chorismate from D-erythrose 4-phosphate and phosphoenolpyruvate: step 3/7. Catalyzes a trans-dehydration via an enolate intermediate. This chain is 3-dehydroquinate dehydratase, found in Synechococcus sp. (strain CC9902).